Here is a 239-residue protein sequence, read N- to C-terminus: Carboxy-S-adenosyl-L-methionine synthase (239 aa).

Residues Y35, 64–66 (GCS), 88–89 (DN), and R195 contribute to the S-adenosyl-L-methionine site.

This sequence belongs to the class I-like SAM-binding methyltransferase superfamily. Cx-SAM synthase family. Homodimer.

The enzyme catalyses prephenate + S-adenosyl-L-methionine = carboxy-S-adenosyl-L-methionine + 3-phenylpyruvate + H2O. Its function is as follows. Catalyzes the conversion of S-adenosyl-L-methionine (SAM) to carboxy-S-adenosyl-L-methionine (Cx-SAM). The chain is Carboxy-S-adenosyl-L-methionine synthase from Helicobacter pylori (strain Shi470).